The sequence spans 346 residues: Protease inhibitor Egf1.5b (346 aa).

The first 28 residues, 1 to 28 (MYIDTGIMSNNIFLFAFFALVGLTRIEA), serve as a signal peptide directing secretion. Residues 52–104 (CRENEHYNSTRIECEDECNDRNNKLCYRFQQFCWCNEGYIRNSSHICVKLEDC) form the TIL domain.

Belongs to the polydnaviridae EGF-like motif protein family. As to quaternary structure, interacts with host PAP1, PAP3 and SPH2.

In terms of biological role, counteracts the host humoral immune response by inhibiting the processing and the amidolytic activity of host PAP1 and PAP3. Thereby, melanization of host hemolymph, normally producing several reactive intermediates toxic for viruses, is deregulated and proper immune response cannot occur. This chain is Protease inhibitor Egf1.5b (O5), found in Microplitis demolitor (Parasitoid wasp).